The following is a 202-amino-acid chain: MAGNLFVVAAPSGAGKTTLVRMLLEQESSVNLSISYTTRHPRPGEQNGREYHFVETPEFRAMIARQEFLEWAEVHGNFYGTSKKWIADQLAAGRDVLLEIDWQGAQQVRALFPQAIGVFILPPSMEELTRRLTGRGTDSPDVIDRRLAAAQAEMRHVGEFDYVIINDQLAQALDDLRAVVRASGLSFGAQRARHAALFERMI.

The Guanylate kinase-like domain occupies 3–181; it reads GNLFVVAAPS…ALDDLRAVVR (179 aa). 10-17 lines the ATP pocket; sequence APSGAGKT.

Belongs to the guanylate kinase family.

The protein localises to the cytoplasm. It catalyses the reaction GMP + ATP = GDP + ADP. Its function is as follows. Essential for recycling GMP and indirectly, cGMP. This Dechloromonas aromatica (strain RCB) protein is Guanylate kinase.